A 290-amino-acid polypeptide reads, in one-letter code: Phosphatidylserine decarboxylase proenzyme (290 aa).

Catalysis depends on charge relay system; for autoendoproteolytic cleavage activity residues Asp-96, His-153, and Ser-257. The Schiff-base intermediate with substrate; via pyruvic acid; for decarboxylase activity role is filled by Ser-257. Ser-257 carries the post-translational modification Pyruvic acid (Ser); by autocatalysis.

Belongs to the phosphatidylserine decarboxylase family. PSD-B subfamily. Prokaryotic type I sub-subfamily. Heterodimer of a large membrane-associated beta subunit and a small pyruvoyl-containing alpha subunit. Requires pyruvate as cofactor. Is synthesized initially as an inactive proenzyme. Formation of the active enzyme involves a self-maturation process in which the active site pyruvoyl group is generated from an internal serine residue via an autocatalytic post-translational modification. Two non-identical subunits are generated from the proenzyme in this reaction, and the pyruvate is formed at the N-terminus of the alpha chain, which is derived from the carboxyl end of the proenzyme. The autoendoproteolytic cleavage occurs by a canonical serine protease mechanism, in which the side chain hydroxyl group of the serine supplies its oxygen atom to form the C-terminus of the beta chain, while the remainder of the serine residue undergoes an oxidative deamination to produce ammonia and the pyruvoyl prosthetic group on the alpha chain. During this reaction, the Ser that is part of the protease active site of the proenzyme becomes the pyruvoyl prosthetic group, which constitutes an essential element of the active site of the mature decarboxylase.

It localises to the cell membrane. It carries out the reaction a 1,2-diacyl-sn-glycero-3-phospho-L-serine + H(+) = a 1,2-diacyl-sn-glycero-3-phosphoethanolamine + CO2. It participates in phospholipid metabolism; phosphatidylethanolamine biosynthesis; phosphatidylethanolamine from CDP-diacylglycerol: step 2/2. Its function is as follows. Catalyzes the formation of phosphatidylethanolamine (PtdEtn) from phosphatidylserine (PtdSer). In Haemophilus influenzae (strain 86-028NP), this protein is Phosphatidylserine decarboxylase proenzyme.